The following is a 149-amino-acid chain: Glutamate mutase sigma subunit (149 aa).

A B12-binding domain is found at 3–140; it reads KATLVIGVIG…AHDINQRHDV (138 aa). Adenosylcob(III)alamin-binding positions include 13-17, H16, 61-63, and 93-97; these read ADCHA, SSI, and NLVVG.

The protein belongs to the methylaspartate mutase GlmS subunit family. In terms of assembly, heterotetramer composed of 2 epsilon subunits (GlmE) and 2 sigma subunits (GlmS). GlmE exists as a homodimer and GlmS as a monomer. The cofactor is adenosylcob(III)alamin.

It carries out the reaction (2S,3S)-3-methyl-L-aspartate = L-glutamate. It participates in amino-acid degradation; L-glutamate degradation via mesaconate pathway; acetate and pyruvate from L-glutamate: step 1/4. Catalyzes the carbon skeleton rearrangement of L-glutamate to L-threo-3-methylaspartate ((2S,3S)-3-methylaspartate). This chain is Glutamate mutase sigma subunit, found in Escherichia coli O157:H7.